Consider the following 299-residue polypeptide: MQKVKAAIIGSGNIGTDLMYKLRKSEVIDLNAMIGIDVESDGLKRAKEAGYEVFDNGIQAIIDNPSLADIVFDATSAKAHRYHAKTLEELEKIVIDLTPAAYGPFVCPAIRNNNFLDKQNVNMITCGGQATIPIVHAINGVANVTYAEIVATISSLSAGPGTRANIDEFTITTKRGIEEVGGADKGKAIIILNPAEPPILMRDTIYCEVKDMDEVSIYEAIHKMVERVRTYVPGYSLKQEPMFDGNRVTVFLEVEGAGDYFPPYAGNLDIMTAAALKVGEEFATQIISEKKRGVMNEAK.

11–14 (SGNI) lines the NAD(+) pocket. Cys126 acts as the Acyl-thioester intermediate in catalysis. Residues 157-165 (SAGPGTRAN) and Asn267 contribute to the NAD(+) site.

It belongs to the acetaldehyde dehydrogenase family.

It catalyses the reaction acetaldehyde + NAD(+) + CoA = acetyl-CoA + NADH + H(+). This is Acetaldehyde dehydrogenase from Bacillus thuringiensis (strain Al Hakam).